A 316-amino-acid polypeptide reads, in one-letter code: Biotin synthase (316 aa).

Positions 38-266 constitute a Radical SAM core domain; it reads YKGKKIELCA…DKDIRVCGGR (229 aa). Positions 56, 60, and 63 each coordinate [4Fe-4S] cluster. Serine 100, cysteine 131, cysteine 191, and arginine 261 together coordinate [2Fe-2S] cluster.

Belongs to the radical SAM superfamily. Biotin synthase family. As to quaternary structure, homodimer. [4Fe-4S] cluster is required as a cofactor. It depends on [2Fe-2S] cluster as a cofactor.

The catalysed reaction is (4R,5S)-dethiobiotin + (sulfur carrier)-SH + 2 reduced [2Fe-2S]-[ferredoxin] + 2 S-adenosyl-L-methionine = (sulfur carrier)-H + biotin + 2 5'-deoxyadenosine + 2 L-methionine + 2 oxidized [2Fe-2S]-[ferredoxin]. Its pathway is cofactor biosynthesis; biotin biosynthesis; biotin from 7,8-diaminononanoate: step 2/2. Its function is as follows. Catalyzes the conversion of dethiobiotin (DTB) to biotin by the insertion of a sulfur atom into dethiobiotin via a radical-based mechanism. This chain is Biotin synthase, found in Thermodesulfovibrio yellowstonii (strain ATCC 51303 / DSM 11347 / YP87).